Consider the following 113-residue polypeptide: Ferredoxin-1 (113 aa).

2 consecutive 4Fe-4S ferredoxin-type domains span residues 2–30 (TYIVTDACVRCKFMDCVEVCPVDCFYEGE) and 31–60 (NFLVINPDECIDCGVCEPECPVDAIKPDTE). [3Fe-4S] cluster-binding residues include cysteine 9 and cysteine 17. The [4Fe-4S] cluster site is built by cysteine 21, cysteine 40, cysteine 43, and cysteine 46. Residue cysteine 50 participates in [3Fe-4S] cluster binding.

It depends on [4Fe-4S] cluster as a cofactor. The cofactor is [3Fe-4S] cluster.

In Caulobacter vibrioides (strain ATCC 19089 / CIP 103742 / CB 15) (Caulobacter crescentus), this protein is Ferredoxin-1 (fdxA).